A 147-amino-acid polypeptide reads, in one-letter code: NADH-quinone oxidoreductase subunit A (147 aa).

The next 3 helical transmembrane spans lie at Leu-13–Val-33, Tyr-70–Ala-90, and Val-104–Leu-124.

Belongs to the complex I subunit 3 family. In terms of assembly, NDH-1 is composed of 14 different subunits. Subunits NuoA, H, J, K, L, M, N constitute the membrane sector of the complex.

It is found in the cell inner membrane. The catalysed reaction is a quinone + NADH + 5 H(+)(in) = a quinol + NAD(+) + 4 H(+)(out). Its function is as follows. NDH-1 shuttles electrons from NADH, via FMN and iron-sulfur (Fe-S) centers, to quinones in the respiratory chain. The immediate electron acceptor for the enzyme in this species is believed to be ubiquinone. Couples the redox reaction to proton translocation (for every two electrons transferred, four hydrogen ions are translocated across the cytoplasmic membrane), and thus conserves the redox energy in a proton gradient. In Gluconacetobacter diazotrophicus (strain ATCC 49037 / DSM 5601 / CCUG 37298 / CIP 103539 / LMG 7603 / PAl5), this protein is NADH-quinone oxidoreductase subunit A.